The sequence spans 456 residues: Chromosomal replication initiator protein DnaA 1 (456 aa).

The domain I, interacts with DnaA modulators stretch occupies residues 1–68 (MRAWEEFLLL…KANLINNNGK (68 aa)). A domain II region spans residues 68–101 (KPIRVRVTSLDKSTPFKESQIQQEKTAYFTMQYG). The segment at 102–320 (DIDPQMSFAN…HALTTLAKRV (219 aa)) is domain III, AAA+ region. Residues S150, G152, K153, and T154 each coordinate ATP. The interval 321–456 (AYKKLSHQLL…AYQSLDLIVD (136 aa)) is domain IV, binds dsDNA.

Belongs to the DnaA family. As to quaternary structure, oligomerizes as a right-handed, spiral filament on DNA at oriC.

Its subcellular location is the cytoplasm. Its function is as follows. Plays an essential role in the initiation and regulation of chromosomal replication. ATP-DnaA binds to the origin of replication (oriC) to initiate formation of the DNA replication initiation complex once per cell cycle. Binds the DnaA box (a 9 base pair repeat at the origin) and separates the double-stranded (ds)DNA. Forms a right-handed helical filament on oriC DNA; dsDNA binds to the exterior of the filament while single-stranded (ss)DNA is stabiized in the filament's interior. The ATP-DnaA-oriC complex binds and stabilizes one strand of the AT-rich DNA unwinding element (DUE), permitting loading of DNA polymerase. After initiation quickly degrades to an ADP-DnaA complex that is not apt for DNA replication. Binds acidic phospholipids. The protein is Chromosomal replication initiator protein DnaA 1 of Chlamydia muridarum (strain MoPn / Nigg).